The primary structure comprises 228 residues: L-ribulose-5-phosphate 4-epimerase UlaF (228 aa).

Substrate is bound by residues G26–N27, S43–G44, and S72–S73. Zn(2+) contacts are provided by D74, H93, and H95. Residue D118 is the Proton donor/acceptor of the active site. Zn(2+) is bound at residue H167. The active-site Proton donor/acceptor is the Y225.

It belongs to the aldolase class II family. AraD/FucA subfamily. It depends on Zn(2+) as a cofactor.

It carries out the reaction L-ribulose 5-phosphate = D-xylulose 5-phosphate. It functions in the pathway cofactor degradation; L-ascorbate degradation; D-xylulose 5-phosphate from L-ascorbate: step 4/4. In terms of biological role, catalyzes the isomerization of L-ribulose 5-phosphate to D-xylulose 5-phosphate. Is involved in the anaerobic L-ascorbate utilization. The protein is L-ribulose-5-phosphate 4-epimerase UlaF of Shigella flexneri.